The chain runs to 364 residues: Popeye domain-containing protein 2 (364 aa).

An N-linked (GlcNAc...) asparagine glycan is attached at asparagine 4. 2 helical membrane passes run 37 to 57 and 77 to 97; these read LLLGFMGGSGVYGCFYLFGFL and IVLWSFLLAVVCLLQLAHLVY. Positions 276-333 are disordered; sequence ADAGPESEKGDEEVCEPAVSPPQATPTSLQQTPPCSTPPATTNFPAPPTRARLSRPDS. Polar residues predominate over residues 300–309; sequence TPTSLQQTPP. Threonine 361 is modified (phosphothreonine).

It belongs to the popeye family. Expressed predominantly in the heart and in the skeletal muscle.

The protein resides in the membrane. It is found in the cell membrane. The protein localises to the sarcolemma. Functionally, important for the maintenance of cardiac function. Plays a regulatory function in heart rate dynamics mediated, at least in part, through cAMP-binding and, probably, by increasing cell surface expression of the potassium channel KCNK2 and enhancing current density. In Homo sapiens (Human), this protein is Popeye domain-containing protein 2 (POPDC2).